The following is a 59-amino-acid chain: Small, acid-soluble spore protein H 2 (59 aa).

This sequence belongs to the SspH family.

The protein resides in the spore core. The sequence is that of Small, acid-soluble spore protein H 2 from Geobacillus kaustophilus (strain HTA426).